The following is a 459-amino-acid chain: Carbonic anhydrase 9 (459 aa).

An N-terminal signal peptide occupies residues 1 to 37 (MAPLCPSPWLPLLIPAPAPGLTVQLLLSLLLLVPVHP). The segment at 38-112 (QRLPRMQEDS…EEEGSLKLED (75 aa)) is proteoglycan-like (PG). At 38 to 414 (QRLPRMQEDS…QLNSCLAAGD (377 aa)) the chain is on the extracellular side. The interval 42–154 (RMQEDSPLGG…GDPPWPRVSP (113 aa)) is disordered. A compositionally biased stretch (acidic residues) spans 55 to 95 (GEDDPLGEEDLPSEEDSPREEDPPGEEDLPGEEDLPGEEDL). Positions 96-112 (PEVKPKSEEEGSLKLED) are enriched in basic and acidic residues. Threonine 115 carries O-linked (GlcNAc...) threonine glycosylation. Basic and acidic residues predominate over residues 129–140 (AHRDKEGDDQSH). Positions 138–391 (QSHWRYGGDP…NGRVIEASFP (254 aa)) are catalytic. The 252-residue stretch at 139–390 (SHWRYGGDPP…LNGRVIEASF (252 aa)) folds into the Alpha-carbonic anhydrase domain. A disulfide bridge links cysteine 156 with cysteine 336. Histidine 200 functions as the Proton donor/acceptor in the catalytic mechanism. Zn(2+)-binding residues include histidine 226, histidine 228, and histidine 251. Residue 332-333 (TT) coordinates substrate. Asparagine 346 carries N-linked (GlcNAc...) asparagine glycosylation. A helical transmembrane segment spans residues 415–435 (ILALVFGLLFAVTSVAFLVQM). Topologically, residues 436 to 459 (RRQHRRGTKGGVSYRPAEVAETGA) are cytoplasmic. A Phosphotyrosine modification is found at tyrosine 449.

Belongs to the alpha-carbonic anhydrase family. Forms oligomers linked by disulfide bonds. The cofactor is Zn(2+). In terms of processing, asn-346 bears high-mannose type glycan structures. As to expression, expressed primarily in carcinoma cells lines. Expression is restricted to very few normal tissues and the most abundant expression is found in the epithelial cells of gastric mucosa.

Its subcellular location is the nucleus. It localises to the nucleolus. It is found in the cell membrane. The protein localises to the cell projection. The protein resides in the microvillus membrane. It carries out the reaction hydrogencarbonate + H(+) = CO2 + H2O. Inhibited by coumarins, saccharin, sulfonamide derivatives such as acetazolamide (AZA) and Foscarnet (phosphonoformate trisodium salt). Catalyzes the interconversion between carbon dioxide and water and the dissociated ions of carbonic acid (i.e. bicarbonate and hydrogen ions). The chain is Carbonic anhydrase 9 (CA9) from Homo sapiens (Human).